We begin with the raw amino-acid sequence, 192 residues long: MRIWKVERNTLETQILVELNIDGSGKAEIDTGIGFLDHMLTLMSFHGKFDLKVICKGDTYVDDHHSVEDIGIAIGEAFKNALGDKKGIRRYSNIYIPMDESLSMVAIDISNRPYLVFNAKFDTQMIGSMSTQCFKEFFRAFVNESRVTLHINLLYGENDHHKIESIFKAFARALKEGSEIVSNEIASSKGVL.

Belongs to the imidazoleglycerol-phosphate dehydratase family.

The protein localises to the cytoplasm. It catalyses the reaction D-erythro-1-(imidazol-4-yl)glycerol 3-phosphate = 3-(imidazol-4-yl)-2-oxopropyl phosphate + H2O. It functions in the pathway amino-acid biosynthesis; L-histidine biosynthesis; L-histidine from 5-phospho-alpha-D-ribose 1-diphosphate: step 6/9. This is Imidazoleglycerol-phosphate dehydratase from Clostridioides difficile (strain 630) (Peptoclostridium difficile).